A 1119-amino-acid chain; its full sequence is uncharacterized protein (1119 aa).

Residues 1-21 (MNNIYISLYIFFISYIIQLCF) form the signal peptide. Residues 170–206 (NKKKLDKEKKKNVIELKEYLEDLKKRMFDMQKRLNDI) adopt a coiled-coil conformation. 2 disordered regions span residues 606-627 (NNNT…IFNN) and 782-905 (ASVQ…EHDE). Residues 788–891 (DKGEDNNDND…EKDKSRDDNK (104 aa)) show a composition bias toward basic and acidic residues. Positions 890-920 (NKAQNNNSTDNEEHDEITEQIGFLKNHNQKY) form a coiled coil.

This is an uncharacterized protein from Plasmodium falciparum (isolate 3D7).